The sequence spans 592 residues: MKTGKIIKVSGPLVVAEGMDEANIYDVCKVGEKGLIGEIIEMRGDKASIQVYEETSGIGPGDPVVTTGEPLSVELGPGLIESMFDGIQRPLDAFMEAAKSSFLTRGVSVPSLNREKKWDFKPTAKVGDEVKSGDVIGTVQETPVVEQRIMIPIGIEGKIKEINAGSFTVTETIAIVETEKGDREVQLMQKWPVRKGRPYSAKINPVEPMLTGQRVIDTFFPVAKGGAAAIPGPFGAGKTVTQHQIAKWGDAEIVVYVGCGERGNEMTDVVNEFPELIDPKTGESLMKRTVLIANTSNMPVAAREASIYTGITIAEYFRDMGYAVSIMADSTSRWAEALREMSGRLEEMPGDEGYPAYLGSRLADYYERAGKVECLGNDGRIGSITAIGAVSPPGGDISEPVSQSTLRIVKVFWGLDAQLAYQRHFPTINWLTSYSLYADTIDKWMNGNVAENWGALRLEAMTILQDEAQLQEIVRLVGIDALSEKDRLKLDVAKSIREDYLQQNGFHEIDTYTSLKKQYKMLSLILGYRKEAERALEAGVYLNDILAMEDLKDRIARSKYIHEDDLEKMDQIVVDLKNAIDNLINKGGVANA.

232-239 (GPFGAGKT) is an ATP binding site.

It belongs to the ATPase alpha/beta chains family.

It catalyses the reaction ATP + H2O + 4 H(+)(in) = ADP + phosphate + 5 H(+)(out). Produces ATP from ADP in the presence of a proton gradient across the membrane. The V-type alpha chain is a catalytic subunit. The protein is V-type ATP synthase alpha chain of Clostridium botulinum (strain Alaska E43 / Type E3).